The following is a 509-amino-acid chain: Histidine ammonia-lyase (509 aa).

Positions 142 to 144 (ASG) form a cross-link, 5-imidazolinone (Ala-Gly). Serine 143 carries the post-translational modification 2,3-didehydroalanine (Ser).

The protein belongs to the PAL/histidase family. In terms of processing, contains an active site 4-methylidene-imidazol-5-one (MIO), which is formed autocatalytically by cyclization and dehydration of residues Ala-Ser-Gly.

It is found in the cytoplasm. It catalyses the reaction L-histidine = trans-urocanate + NH4(+). The protein operates within amino-acid degradation; L-histidine degradation into L-glutamate; N-formimidoyl-L-glutamate from L-histidine: step 1/3. This chain is Histidine ammonia-lyase, found in Pseudomonas aeruginosa (strain LESB58).